A 345-amino-acid polypeptide reads, in one-letter code: S-adenosylmethionine:tRNA ribosyltransferase-isomerase (345 aa).

It belongs to the QueA family. Monomer.

The protein localises to the cytoplasm. It carries out the reaction 7-aminomethyl-7-carbaguanosine(34) in tRNA + S-adenosyl-L-methionine = epoxyqueuosine(34) in tRNA + adenine + L-methionine + 2 H(+). It participates in tRNA modification; tRNA-queuosine biosynthesis. Transfers and isomerizes the ribose moiety from AdoMet to the 7-aminomethyl group of 7-deazaguanine (preQ1-tRNA) to give epoxyqueuosine (oQ-tRNA). In Acidiphilium cryptum (strain JF-5), this protein is S-adenosylmethionine:tRNA ribosyltransferase-isomerase.